The primary structure comprises 363 residues: Jasmonate-induced oxygenase 3 (363 aa).

The region spanning 210-312 (ESGGCLRVNY…RLSLAFFYNP (103 aa)) is the Fe2OG dioxygenase domain. Arginine 216 is a binding site for jasmonate. 2-oxoglutarate is bound by residues asparagine 218 and tyrosine 220. 3 residues coordinate Fe cation: histidine 235, aspartate 237, and histidine 293. The 2-oxoglutarate site is built by arginine 303 and serine 305. Jasmonate-binding residues include arginine 342 and arginine 346.

This sequence belongs to the iron/ascorbate-dependent oxidoreductase family. The cofactor is L-ascorbate. Fe(2+) is required as a cofactor.

It carries out the reaction jasmonate + 2-oxoglutarate + O2 = (1R,2R)-12-hydroxyjasmonate + succinate + CO2. Functionally, 2-oxoglutarate-dependent dioxygenase involved in the oxidation of jasmonate (JA), a stress-induced phytohormone synthesized in response to attack by pathogens and herbivores, which triggers the activation of defense responses via the JA-mediated signaling pathway. Converts JA to 12-hydroxyjasmonate (12OH-JA), an inactive form of JA. Is specific to free JA, and cannot oxidize the bioactive form jasmonoyl-L-isoleucine (JA-Ile) or other JA-amino acid conjugates. Prevents over-accumulation of JA and indirectly its bioactive form JA-Ile under stress response. Acts as a negative regulator of JA-mediated defense signaling, by contributing to 12OH-JA accumulation, which represses JA defense responses upon infection by the fungal pathogen Botrytis cinerea. Acts as a negative regulator of JA-mediated defense responses upon infestation by the herbivorous caterpillar Mamestra brassicae. This Arabidopsis thaliana (Mouse-ear cress) protein is Jasmonate-induced oxygenase 3.